Consider the following 365-residue polypeptide: 3-dehydroquinate synthase (365 aa).

NAD(+)-binding positions include 106–110 (GVIGD), 130–131 (TT), lysine 142, lysine 151, and 169–172 (FFAT). Zn(2+) contacts are provided by glutamate 184, histidine 247, and histidine 264.

This sequence belongs to the sugar phosphate cyclases superfamily. Dehydroquinate synthase family. Co(2+) is required as a cofactor. The cofactor is Zn(2+). NAD(+) serves as cofactor.

Its subcellular location is the cytoplasm. It carries out the reaction 7-phospho-2-dehydro-3-deoxy-D-arabino-heptonate = 3-dehydroquinate + phosphate. Its pathway is metabolic intermediate biosynthesis; chorismate biosynthesis; chorismate from D-erythrose 4-phosphate and phosphoenolpyruvate: step 2/7. Functionally, catalyzes the conversion of 3-deoxy-D-arabino-heptulosonate 7-phosphate (DAHP) to dehydroquinate (DHQ). This is 3-dehydroquinate synthase from Listeria monocytogenes serotype 4b (strain CLIP80459).